The sequence spans 153 residues: Movement protein (153 aa).

The tract at residues S107–R153 is disordered.

This sequence belongs to the luteoviruses movement protein family.

Its function is as follows. Transports viral genome to neighboring plant cells directly through plasmosdesmata, without any budding. The movement protein allows efficient cell to cell propagation, by bypassing the host cell wall barrier. The sequence is that of Movement protein from Avena byzantina (Oat).